The chain runs to 109 residues: Thiosulfate sulfurtransferase GlpE (109 aa).

In terms of domain architecture, Rhodanese spans 17–105; it reads HQQTAVLVDI…WHRHFPAEVA (89 aa). Cys65 acts as the Cysteine persulfide intermediate in catalysis.

The protein belongs to the GlpE family.

The protein resides in the cytoplasm. It carries out the reaction thiosulfate + hydrogen cyanide = thiocyanate + sulfite + 2 H(+). The enzyme catalyses thiosulfate + [thioredoxin]-dithiol = [thioredoxin]-disulfide + hydrogen sulfide + sulfite + 2 H(+). Functionally, transferase that catalyzes the transfer of sulfur from thiosulfate to thiophilic acceptors such as cyanide or dithiols. May function in a CysM-independent thiosulfate assimilation pathway by catalyzing the conversion of thiosulfate to sulfite, which can then be used for L-cysteine biosynthesis. The protein is Thiosulfate sulfurtransferase GlpE of Klebsiella pneumoniae subsp. pneumoniae (strain ATCC 700721 / MGH 78578).